The primary structure comprises 56 residues: UPF0434 protein Sden_2197 (56 aa).

Belongs to the UPF0434 family.

This Shewanella denitrificans (strain OS217 / ATCC BAA-1090 / DSM 15013) protein is UPF0434 protein Sden_2197.